A 140-amino-acid polypeptide reads, in one-letter code: Large ribosomal subunit protein uL11 (140 aa).

It belongs to the universal ribosomal protein uL11 family. Part of the ribosomal stalk of the 50S ribosomal subunit. Interacts with L10 and the large rRNA to form the base of the stalk. L10 forms an elongated spine to which L12 dimers bind in a sequential fashion forming a multimeric L10(L12)X complex. Post-translationally, one or more lysine residues are methylated.

In terms of biological role, forms part of the ribosomal stalk which helps the ribosome interact with GTP-bound translation factors. This is Large ribosomal subunit protein uL11 from Halothermothrix orenii (strain H 168 / OCM 544 / DSM 9562).